Consider the following 133-residue polypeptide: Ribonuclease P protein component (133 aa).

The protein belongs to the RnpA family. As to quaternary structure, consists of a catalytic RNA component (M1 or rnpB) and a protein subunit.

The catalysed reaction is Endonucleolytic cleavage of RNA, removing 5'-extranucleotides from tRNA precursor.. In terms of biological role, RNaseP catalyzes the removal of the 5'-leader sequence from pre-tRNA to produce the mature 5'-terminus. It can also cleave other RNA substrates such as 4.5S RNA. The protein component plays an auxiliary but essential role in vivo by binding to the 5'-leader sequence and broadening the substrate specificity of the ribozyme. This chain is Ribonuclease P protein component, found in Pseudomonas fluorescens (strain Pf0-1).